The primary structure comprises 428 residues: Serine--tRNA ligase (428 aa).

L-serine is bound at residue 235-237 (TAE). 266–268 (RSE) is an ATP binding site. Position 289 (Glu289) interacts with L-serine. 353 to 356 (EISS) contributes to the ATP binding site. Ser389 provides a ligand contact to L-serine.

It belongs to the class-II aminoacyl-tRNA synthetase family. Type-1 seryl-tRNA synthetase subfamily. In terms of assembly, homodimer. The tRNA molecule binds across the dimer.

The protein resides in the cytoplasm. The catalysed reaction is tRNA(Ser) + L-serine + ATP = L-seryl-tRNA(Ser) + AMP + diphosphate + H(+). The enzyme catalyses tRNA(Sec) + L-serine + ATP = L-seryl-tRNA(Sec) + AMP + diphosphate + H(+). It participates in aminoacyl-tRNA biosynthesis; selenocysteinyl-tRNA(Sec) biosynthesis; L-seryl-tRNA(Sec) from L-serine and tRNA(Sec): step 1/1. Functionally, catalyzes the attachment of serine to tRNA(Ser). Is also able to aminoacylate tRNA(Sec) with serine, to form the misacylated tRNA L-seryl-tRNA(Sec), which will be further converted into selenocysteinyl-tRNA(Sec). This chain is Serine--tRNA ligase, found in Shewanella baltica (strain OS155 / ATCC BAA-1091).